The chain runs to 234 residues: Triosephosphate isomerase (234 aa).

8 to 10 (NFK) is a substrate binding site. H90 acts as the Electrophile in catalysis. The active-site Proton acceptor is the E159. Substrate-binding positions include G165, S197, and 218–219 (GS).

In terms of assembly, homodimer.

It localises to the cytoplasm. It catalyses the reaction D-glyceraldehyde 3-phosphate = dihydroxyacetone phosphate. Its pathway is carbohydrate biosynthesis; gluconeogenesis. It functions in the pathway carbohydrate degradation; glycolysis; D-glyceraldehyde 3-phosphate from glycerone phosphate: step 1/1. In terms of biological role, involved in the gluconeogenesis. Catalyzes stereospecifically the conversion of dihydroxyacetone phosphate (DHAP) to D-glyceraldehyde-3-phosphate (G3P). The sequence is that of Triosephosphate isomerase from Helicobacter pylori (strain ATCC 700392 / 26695) (Campylobacter pylori).